A 919-amino-acid polypeptide reads, in one-letter code: Aminodeoxychorismate synthase, chloroplastic (919 aa).

The transit peptide at 1–45 directs the protein to the chloroplast; it reads MNMNFSFCSTSSELSYPSENVLRFSVASRLFSPKWKKSFISLPCR. One can recognise a Glutamine amidotransferase type-1 domain in the interval 86–342; it reads RTLLIDNYDS…KDITVNYWSR (257 aa). Cysteine 172 acts as the Nucleophile in catalysis. Active-site residues include histidine 316 and glutamate 318. Residues 436–910 form a PABB component region; it reads IFMELFGKNR…KTRAPANAVM (475 aa).

This sequence in the C-terminal section; belongs to the anthranilate synthase component I family.

The protein resides in the plastid. It localises to the chloroplast. It catalyses the reaction chorismate + L-glutamine = 4-amino-4-deoxychorismate + L-glutamate. It participates in cofactor biosynthesis; tetrahydrofolate biosynthesis; 4-aminobenzoate from chorismate: step 1/2. With respect to regulation, activated by chorismate and inhibited by dihydrofolate and methotrexate. Bifunctional enzyme that catalyzes the biosynthesis of 4-amino-4-deoxychorismate (ADC) from chorismate and glutamine. In the first step, a glutamine amidotransferase generates ammonia that is channelled between the binding sites of glutamine and chorismate and used along with chorismate in the second step, catalyzed by aminodeoxychorismate synthase, to produce ADC. Required for the synthesis of 4-aminobenzoate (PABA), an important component in tetrahydrofolate biosynthesis. Does not possess ADC lyase activity. The chain is Aminodeoxychorismate synthase, chloroplastic (ADCS) from Arabidopsis thaliana (Mouse-ear cress).